The following is a 114-amino-acid chain: Superoxide dismutase [Cu-Zn] (114 aa).

3 residues coordinate Cu cation: His-37, His-39, and His-54. Positions 48 to 68 (CMSSGPHFNPRNKEHGAPTDE) are disordered. Zn(2+) contacts are provided by His-54, His-62, His-71, and Asp-74. A compositionally biased stretch (basic and acidic residues) spans 58 to 68 (RNKEHGAPTDE). Residue His-111 coordinates Cu cation.

This sequence belongs to the Cu-Zn superoxide dismutase family. In terms of assembly, homodimer. It depends on Cu cation as a cofactor. Zn(2+) is required as a cofactor.

Its subcellular location is the cytoplasm. It carries out the reaction 2 superoxide + 2 H(+) = H2O2 + O2. In terms of biological role, destroys radicals which are normally produced within the cells and which are toxic to biological systems. The sequence is that of Superoxide dismutase [Cu-Zn] from Drosophila miranda (Fruit fly).